The chain runs to 1044 residues: GRB10-interacting GYF protein 1 (1044 aa).

4 positions are modified to phosphoserine: Ser-24, Ser-28, Ser-137, and Ser-157. Disordered regions lie at residues 104–290 and 306–424; these read GKGA…DGLP and ASGA…LEDE. Basic and acidic residues-rich tracts occupy residues 148 to 179 and 186 to 203; these read NPRE…RSGF and PRKE…SLRE. Phosphoserine is present on Ser-228. 2 stretches are compositionally biased toward basic and acidic residues: residues 237-265 and 316-332; these read GWRE…EDGR and GPKE…FRGL. Residues 333–350 show a composition bias toward acidic residues; the sequence is EEEEEEEEEPSEGVDEER. Ser-343 is modified (phosphoserine). The segment covering 366 to 379 has biased composition (low complexity); sequence NSSSPSSLPALGPL. Positions 389–403 are enriched in basic and acidic residues; it reads AVEKELPPAEGDELR. Ser-408 bears the Phosphoserine mark. Residues 476–524 enclose the GYF domain; sequence ARKWFYKDPQGEIQGPFTTQEMAEWFQAGYFSMSLLVKRGCDEGFQPLG. 2 positions are modified to phosphoserine: Ser-540 and Ser-634. Over residues 692-706 the composition is skewed to basic and acidic residues; sequence KREEEERKRREEKRR. Disordered regions lie at residues 692-721, 820-842, 855-883, 966-987, 1000-1019, and 1024-1044; these read KREE…RQEE, EAGP…LGLW, SLGL…RKKT, QKAS…QEAW, NHST…RALM, and PSIL…VDDY. Gly residues predominate over residues 829–839; it reads DKSGGSSGGNL. 2 stretches are compositionally biased toward low complexity: residues 855–877 and 970–984; these read SLGL…LSGR and QQRQ…QQQQ. Position 863 is a phosphoserine (Ser-863).

The protein belongs to the GIGYF family. In terms of assembly, interacts with GRB10. This transient binding is increased under IGF1 stimulation and leads to recruitment of GIGYF1/GRB10 complex to IGF1 receptor. Interacts with DDX6. Ubiquitous. Lower expression in skeletal muscle, liver and testis.

Functionally, may act cooperatively with GRB10 to regulate tyrosine kinase receptor signaling. May increase IGF1 receptor phosphorylation under IGF1 stimulation as well as phosphorylation of IRS1 and SHC1. This is GRB10-interacting GYF protein 1 (Gigyf1) from Mus musculus (Mouse).